A 124-amino-acid chain; its full sequence is Small ribosomal subunit protein uS12 (124 aa).

Asp89 bears the 3-methylthioaspartic acid mark. Residues 105-124 (QGVKNRKQARSRYGAKKEKS) form a disordered region. Residues 108-118 (KNRKQARSRYG) are compositionally biased toward basic residues.

Belongs to the universal ribosomal protein uS12 family. As to quaternary structure, part of the 30S ribosomal subunit. Contacts proteins S8 and S17. May interact with IF1 in the 30S initiation complex.

With S4 and S5 plays an important role in translational accuracy. In terms of biological role, interacts with and stabilizes bases of the 16S rRNA that are involved in tRNA selection in the A site and with the mRNA backbone. Located at the interface of the 30S and 50S subunits, it traverses the body of the 30S subunit contacting proteins on the other side and probably holding the rRNA structure together. The combined cluster of proteins S8, S12 and S17 appears to hold together the shoulder and platform of the 30S subunit. The polypeptide is Small ribosomal subunit protein uS12 (Mycobacterium avium (strain 104)).